Here is an 88-residue protein sequence, read N- to C-terminus: FXYD domain-containing ion transport regulator 3 (88 aa).

The segment at residues 1–20 (MQEVVLSLLVLLAGLPTLDA) is a signal peptide (not cleaved). Over 1–38 (MQEVVLSLLVLLAGLPTLDANDPENKNDPFYYDWYSLR) the chain is Extracellular. The helical transmembrane segment at 39–59 (VGGLICAGILCALGIIVLMSG) threads the bilayer. At 60-88 (KCKCKFRQKPSHRPGEGPPLITPGSAHNC) the chain is on the cytoplasmic side. A disordered region spans residues 67–88 (QKPSHRPGEGPPLITPGSAHNC).

The protein belongs to the FXYD family. Regulatory subunit of the sodium/potassium-transporting ATPase which is composed of a catalytic alpha subunit, a non-catalytic beta subunit and an additional regulatory subunit. Interacts with catalytic alpha subunit ATP1A1. Also interacts with non-catalytic beta subunit ATP1B1. Interacts with the ATP1A1-ATP1B1, ATP1A2-ATP1B1 and ATP1A3-ATP1B1 NKA isozymes. Post-translationally, glutathionylated. In terms of tissue distribution, expressed at high levels in heart, skeletal muscle and liver with low levels of expression in breast, brain, lung, stomach and colon. In the gastric gland, mainly expressed in the mucus cells forming the upper part of the gland and is absent from the parietal cells.

The protein resides in the cell membrane. In terms of biological role, associates with and regulates the activity of the sodium/potassium-transporting ATPase (NKA) which transports Na(+) out of the cell and K(+) into the cell. Reduces glutathionylation of the NKA beta-1 subunit ATP1B1, thus reversing glutathionylation-mediated inhibition of ATP1B1. Induces a hyperpolarization-activated chloride current when expressed in Xenopus oocytes. This chain is FXYD domain-containing ion transport regulator 3 (Fxyd3), found in Mus musculus (Mouse).